The following is a 504-amino-acid chain: Maturase K (504 aa).

It belongs to the intron maturase 2 family. MatK subfamily.

The protein resides in the plastid. Its subcellular location is the chloroplast. Functionally, usually encoded in the trnK tRNA gene intron. Probably assists in splicing its own and other chloroplast group II introns. The chain is Maturase K from Olimarabidopsis pumila (Dwarf rocket).